The primary structure comprises 343 residues: Probable dual-specificity RNA methyltransferase RlmN (343 aa).

The active-site Proton acceptor is the E83. One can recognise a Radical SAM core domain in the interval 89 to 323 (YLDRKTICVS…VSVRRSRGKD (235 aa)). The cysteines at positions 96 and 328 are disulfide-linked. [4Fe-4S] cluster contacts are provided by C103, C107, and C110. S-adenosyl-L-methionine-binding positions include 153–154 (GE), S185, 209–211 (SLH), and N285. The S-methylcysteine intermediate role is filled by C328.

Belongs to the radical SAM superfamily. RlmN family. Requires [4Fe-4S] cluster as cofactor.

Its subcellular location is the cytoplasm. The catalysed reaction is adenosine(2503) in 23S rRNA + 2 reduced [2Fe-2S]-[ferredoxin] + 2 S-adenosyl-L-methionine = 2-methyladenosine(2503) in 23S rRNA + 5'-deoxyadenosine + L-methionine + 2 oxidized [2Fe-2S]-[ferredoxin] + S-adenosyl-L-homocysteine. The enzyme catalyses adenosine(37) in tRNA + 2 reduced [2Fe-2S]-[ferredoxin] + 2 S-adenosyl-L-methionine = 2-methyladenosine(37) in tRNA + 5'-deoxyadenosine + L-methionine + 2 oxidized [2Fe-2S]-[ferredoxin] + S-adenosyl-L-homocysteine. Specifically methylates position 2 of adenine 2503 in 23S rRNA and position 2 of adenine 37 in tRNAs. The protein is Probable dual-specificity RNA methyltransferase RlmN of Deinococcus deserti (strain DSM 17065 / CIP 109153 / LMG 22923 / VCD115).